The chain runs to 722 residues: Mesentericin-Y105 transport/processing ATP-binding protein MesD (722 aa).

The Peptidase C39 domain occupies 16-143 (QVDERDCGVA…EEWTGVSIFI (128 aa)). The active site involves Cys-22. 8 helical membrane-spanning segments follow: residues 171–191 (LLVI…ILGS), 210–230 (LGIV…LSYA), 242–262 (LSID…MSFF), 287–307 (TMLS…VLVV), 311–331 (TLFL…WLFM), 401–421 (SLLQ…LVMT), 429–449 (LITY…IINL), and 518–538 (IALV…LVNF). The 283-residue stretch at 173–455 (VINIVIAALL…IINLQTKLQQ (283 aa)) folds into the ABC transmembrane type-1 domain. Residues 489-722 (LVADHITYKY…GGFYASLFNH (234 aa)) form the ABC transporter domain. Position 522–529 (522–529 (GISGSGKS)) interacts with ATP.

The protein belongs to the ABC transporter superfamily.

It is found in the cell membrane. Involved in the export process of the bacteriocin mesentericin-Y105. In Leuconostoc mesenteroides, this protein is Mesentericin-Y105 transport/processing ATP-binding protein MesD (mesD).